The chain runs to 381 residues: Queuine tRNA-ribosyltransferase (381 aa).

Residue aspartate 96 is the Proton acceptor of the active site. Substrate is bound by residues 96–100 (DSGGF), aspartate 150, glutamine 193, and glycine 220. The interval 251–257 (GVGSPDS) is RNA binding. Residue aspartate 270 is the Nucleophile of the active site. The segment at 275–279 (TRIAR) is RNA binding; important for wobble base 34 recognition. Residues cysteine 308, cysteine 310, cysteine 313, and histidine 339 each contribute to the Zn(2+) site.

Belongs to the queuine tRNA-ribosyltransferase family. As to quaternary structure, homodimer. Within each dimer, one monomer is responsible for RNA recognition and catalysis, while the other monomer binds to the replacement base PreQ1. Zn(2+) is required as a cofactor.

It carries out the reaction 7-aminomethyl-7-carbaguanine + guanosine(34) in tRNA = 7-aminomethyl-7-carbaguanosine(34) in tRNA + guanine. Its pathway is tRNA modification; tRNA-queuosine biosynthesis. Catalyzes the base-exchange of a guanine (G) residue with the queuine precursor 7-aminomethyl-7-deazaguanine (PreQ1) at position 34 (anticodon wobble position) in tRNAs with GU(N) anticodons (tRNA-Asp, -Asn, -His and -Tyr). Catalysis occurs through a double-displacement mechanism. The nucleophile active site attacks the C1' of nucleotide 34 to detach the guanine base from the RNA, forming a covalent enzyme-RNA intermediate. The proton acceptor active site deprotonates the incoming PreQ1, allowing a nucleophilic attack on the C1' of the ribose to form the product. After dissociation, two additional enzymatic reactions on the tRNA convert PreQ1 to queuine (Q), resulting in the hypermodified nucleoside queuosine (7-(((4,5-cis-dihydroxy-2-cyclopenten-1-yl)amino)methyl)-7-deazaguanosine). The polypeptide is Queuine tRNA-ribosyltransferase (Lysinibacillus sphaericus (strain C3-41)).